The sequence spans 347 residues: Tyrosine recombinase XerC 2 (347 aa).

The 92-residue stretch at 17 to 108 (LVLTRYMEAH…PLKTWFKWLA (92 aa)) folds into the Core-binding (CB) domain. Positions 125–313 (KLPKHLPRAI…SIEHLRAIHD (189 aa)) constitute a Tyr recombinase domain. Active-site residues include Arg-170, Lys-195, His-265, Arg-268, and His-291. Tyr-300 serves as the catalytic O-(3'-phospho-DNA)-tyrosine intermediate.

Belongs to the 'phage' integrase family.

It localises to the cytoplasm. Its function is as follows. Site-specific tyrosine recombinase, which acts by catalyzing the cutting and rejoining of the recombining DNA molecules. This is Tyrosine recombinase XerC 2 from Ralstonia nicotianae (strain ATCC BAA-1114 / GMI1000) (Ralstonia solanacearum).